Here is an 85-residue protein sequence, read N- to C-terminus: Small ribosomal subunit protein bS16 (85 aa).

Belongs to the bacterial ribosomal protein bS16 family.

In Acinetobacter baylyi (strain ATCC 33305 / BD413 / ADP1), this protein is Small ribosomal subunit protein bS16.